A 229-amino-acid chain; its full sequence is MNTPLHHIKNRTKILPPLRVGIGGPVGSGKTTLLEMLCKGMRERYDLVAITNDIYTKEDQRLLTESGALPADRIMGVETGGCPHTAIREDASINLEAIDRMLVDFPDADIVFIESGGDNLAATFSPELSDLTIYVIDVAAGEKIPRKGGPGITKSDLFVINKTDLAPYVGASLDVMAADTTRMRTTVKGLKPFVMTNLKTLSGVQEVMAFIESKGMLRSGDAATLRDGR.

Residue 24–31 (GPVGSGKT) coordinates GTP.

This sequence belongs to the SIMIBI class G3E GTPase family. UreG subfamily. As to quaternary structure, homodimer. UreD, UreF and UreG form a complex that acts as a GTP-hydrolysis-dependent molecular chaperone, activating the urease apoprotein by helping to assemble the nickel containing metallocenter of UreC. The UreE protein probably delivers the nickel.

Its subcellular location is the cytoplasm. Facilitates the functional incorporation of the urease nickel metallocenter. This process requires GTP hydrolysis, probably effectuated by UreG. The polypeptide is Urease accessory protein UreG (Albidiferax ferrireducens (strain ATCC BAA-621 / DSM 15236 / T118) (Rhodoferax ferrireducens)).